A 338-amino-acid chain; its full sequence is Tryptophan--tRNA ligase (338 aa).

Residues 11 to 13 and 19 to 20 each bind ATP; these read QPS and GN. The short motif at 12–20 is the 'HIGH' region element; that stretch reads PSGELSIGN. Asp135 lines the L-tryptophan pocket. ATP contacts are provided by residues 147–149, Val189, and 198–202; these read GSD and KMSKS. The 'KMSKS' region signature appears at 198 to 202; it reads KMSKS.

Belongs to the class-I aminoacyl-tRNA synthetase family. In terms of assembly, homodimer.

It localises to the cytoplasm. The enzyme catalyses tRNA(Trp) + L-tryptophan + ATP = L-tryptophyl-tRNA(Trp) + AMP + diphosphate + H(+). Its function is as follows. Catalyzes the attachment of tryptophan to tRNA(Trp). This chain is Tryptophan--tRNA ligase, found in Vibrio vulnificus (strain YJ016).